The following is a 270-amino-acid chain: Formamidopyrimidine-DNA glycosylase (270 aa).

Pro-2 serves as the catalytic Schiff-base intermediate with DNA. Glu-3 (proton donor) is an active-site residue. The active-site Proton donor; for beta-elimination activity is Lys-58. DNA-binding residues include His-91, Arg-110, and Arg-151. Residues 236–270 form an FPG-type zinc finger; sequence FVYGRGGEFCKVCGSTLREIRLGQRASVYCPRCQR. Residue Arg-260 is the Proton donor; for delta-elimination activity of the active site.

Belongs to the FPG family. Monomer. The cofactor is Zn(2+).

The enzyme catalyses Hydrolysis of DNA containing ring-opened 7-methylguanine residues, releasing 2,6-diamino-4-hydroxy-5-(N-methyl)formamidopyrimidine.. It catalyses the reaction 2'-deoxyribonucleotide-(2'-deoxyribose 5'-phosphate)-2'-deoxyribonucleotide-DNA = a 3'-end 2'-deoxyribonucleotide-(2,3-dehydro-2,3-deoxyribose 5'-phosphate)-DNA + a 5'-end 5'-phospho-2'-deoxyribonucleoside-DNA + H(+). Involved in base excision repair of DNA damaged by oxidation or by mutagenic agents. Acts as a DNA glycosylase that recognizes and removes damaged bases. Has a preference for oxidized purines, such as 7,8-dihydro-8-oxoguanine (8-oxoG). Has AP (apurinic/apyrimidinic) lyase activity and introduces nicks in the DNA strand. Cleaves the DNA backbone by beta-delta elimination to generate a single-strand break at the site of the removed base with both 3'- and 5'-phosphates. This is Formamidopyrimidine-DNA glycosylase from Pseudomonas aeruginosa (strain LESB58).